We begin with the raw amino-acid sequence, 422 residues long: UDP-N-acetylglucosamine 1-carboxyvinyltransferase (422 aa).

22 to 23 (KN) contributes to the phosphoenolpyruvate binding site. Arg92 serves as a coordination point for UDP-N-acetyl-alpha-D-glucosamine. Cys116 serves as the catalytic Proton donor. A 2-(S-cysteinyl)pyruvic acid O-phosphothioketal modification is found at Cys116. Residues 121 to 125 (RPIDL), Asp307, and Leu329 each bind UDP-N-acetyl-alpha-D-glucosamine.

This sequence belongs to the EPSP synthase family. MurA subfamily.

The protein resides in the cytoplasm. It carries out the reaction phosphoenolpyruvate + UDP-N-acetyl-alpha-D-glucosamine = UDP-N-acetyl-3-O-(1-carboxyvinyl)-alpha-D-glucosamine + phosphate. Its pathway is cell wall biogenesis; peptidoglycan biosynthesis. Its function is as follows. Cell wall formation. Adds enolpyruvyl to UDP-N-acetylglucosamine. The protein is UDP-N-acetylglucosamine 1-carboxyvinyltransferase of Sulfurovum sp. (strain NBC37-1).